Reading from the N-terminus, the 315-residue chain is Prephenate dehydratase (315 aa).

The 188-residue stretch at 3–190 (RIAYLGPQGT…ARTRFVLVGR (188 aa)) folds into the Prephenate dehydratase domain. The ACT domain occupies 204–281 (SVALRLPNTP…EDVRYLGSWP (78 aa)).

As to quaternary structure, homodimer.

It catalyses the reaction prephenate + H(+) = 3-phenylpyruvate + CO2 + H2O. Its pathway is amino-acid biosynthesis; L-phenylalanine biosynthesis; phenylpyruvate from prephenate: step 1/1. In Mycobacterium sp. (strain JLS), this protein is Prephenate dehydratase (pheA).